We begin with the raw amino-acid sequence, 161 residues long: Cyclic pyranopterin monophosphate synthase (161 aa).

Substrate is bound by residues 75–77 (LCH) and 113–114 (ME). The active site involves aspartate 128.

The protein belongs to the MoaC family. As to quaternary structure, homohexamer; trimer of dimers.

It carries out the reaction (8S)-3',8-cyclo-7,8-dihydroguanosine 5'-triphosphate = cyclic pyranopterin phosphate + diphosphate. Its pathway is cofactor biosynthesis; molybdopterin biosynthesis. In terms of biological role, catalyzes the conversion of (8S)-3',8-cyclo-7,8-dihydroguanosine 5'-triphosphate to cyclic pyranopterin monophosphate (cPMP). This is Cyclic pyranopterin monophosphate synthase from Methylobacillus flagellatus (strain ATCC 51484 / DSM 6875 / VKM B-1610 / KT).